Reading from the N-terminus, the 338-residue chain is Glycerol-3-phosphate dehydrogenase [NAD(P)+] (338 aa).

NADPH contacts are provided by Ser-13, Trp-14, and Lys-108. The sn-glycerol 3-phosphate site is built by Lys-108, Gly-139, and Ser-141. Ala-143 is a binding site for NADPH. Residues Lys-194, Asp-247, Ser-257, Arg-258, and Asn-259 each coordinate sn-glycerol 3-phosphate. Lys-194 functions as the Proton acceptor in the catalytic mechanism. Residue Arg-258 coordinates NADPH. NADPH-binding residues include Val-282 and Glu-284.

Belongs to the NAD-dependent glycerol-3-phosphate dehydrogenase family.

The protein localises to the cytoplasm. It catalyses the reaction sn-glycerol 3-phosphate + NAD(+) = dihydroxyacetone phosphate + NADH + H(+). It carries out the reaction sn-glycerol 3-phosphate + NADP(+) = dihydroxyacetone phosphate + NADPH + H(+). It functions in the pathway membrane lipid metabolism; glycerophospholipid metabolism. Its function is as follows. Catalyzes the reduction of the glycolytic intermediate dihydroxyacetone phosphate (DHAP) to sn-glycerol 3-phosphate (G3P), the key precursor for phospholipid synthesis. This chain is Glycerol-3-phosphate dehydrogenase [NAD(P)+], found in Streptococcus pneumoniae (strain Hungary19A-6).